An 82-amino-acid chain; its full sequence is Diphthamide biosynthesis protein 3 (82 aa).

In terms of domain architecture, DPH-type MB spans 8–64 (IYDEVEIEDMTYDPALQTYSYPCPCGDKFEIALADLQDGQDIAVCPSCSLMVRVIFE). Residues cysteine 30, cysteine 32, cysteine 52, and cysteine 55 each contribute to the Fe cation site.

The protein belongs to the DPH3 family. As to quaternary structure, component of the 2-(3-amino-3-carboxypropyl)histidine synthase complex composed of dph-1, dph-2, dph-3 and a NADH-dependent reductase, predominantly cbr-1. The cofactor is Fe(2+).

The protein resides in the cytoplasm. It localises to the nucleus. The catalysed reaction is [3Fe-4S](1+)-[protein] + Fe(2+)-[Dph3] = [3Fe-4S](0)-[protein] + Fe(3+)-[Dph3]. It carries out the reaction 2 [3Fe-4S](0)-[protein] + 2 Fe(2+)-[Dph3] + NADH = 2 [4Fe-4S](1+)-[protein] + 2 [Dph3] + NAD(+) + H(+). The protein operates within protein modification; peptidyl-diphthamide biosynthesis. In terms of biological role, required for the first step of diphthamide biosynthesis, a post-translational modification of histidine which occurs in elongation factor 2. Dph-1 and dph-2 transfer a 3-amino-3-carboxypropyl (ACP) group from S-adenosyl-L-methionine (SAM) to a histidine residue, the reaction is assisted by a reduction system comprising dph-3 and a NADH-dependent reductase, predominantly cbr-1. Acts as an electron donor to reduce the Fe-S cluster in dph1-dph2 keeping the [4Fe-4S] clusters in the active and reduced state. Restores iron to dph-1-dph-2 iron-sulfur clusters which have degraded from [4Fe-4S] to [3Fe-4S] by donating an iron atom to reform [4Fe-4S] clusters, in a manner dependent on the presence of elongation factor 2 and SAM. Associates with the elongator complex and is required for tRNA Wobble base modifications mediated by the elongator complex. The elongator complex is required for multiple tRNA modifications, including mcm5U (5-methoxycarbonylmethyl uridine), mcm5s 2U (5-methoxycarbonylmethyl-2-thiouridine), and ncm5U (5-carbamoylmethyl uridine). The chain is Diphthamide biosynthesis protein 3 (dph-3) from Neurospora crassa (strain ATCC 24698 / 74-OR23-1A / CBS 708.71 / DSM 1257 / FGSC 987).